The following is a 108-amino-acid chain: uncharacterized protein (108 aa).

The signal sequence occupies residues 1–24 (MNLWEFRFGKSFLFIPNFIMKVLA).

The protein to M.jannaschii MJ0803.

This is an uncharacterized protein from Methanocaldococcus jannaschii (strain ATCC 43067 / DSM 2661 / JAL-1 / JCM 10045 / NBRC 100440) (Methanococcus jannaschii).